The primary structure comprises 506 residues: Cobyric acid synthase (506 aa).

Residues 260-453 enclose the GATase cobBQ-type domain; it reads KVGVAAIYFP…FHGIFNEPAV (194 aa). Cys-341 (nucleophile) is an active-site residue. His-445 is a catalytic residue.

The protein belongs to the CobB/CobQ family. CobQ subfamily.

Its pathway is cofactor biosynthesis; adenosylcobalamin biosynthesis. In terms of biological role, catalyzes amidations at positions B, D, E, and G on adenosylcobyrinic A,C-diamide. NH(2) groups are provided by glutamine, and one molecule of ATP is hydrogenolyzed for each amidation. In Chlorobium chlorochromatii (strain CaD3), this protein is Cobyric acid synthase.